We begin with the raw amino-acid sequence, 242 residues long: MEVADPSRAPPEYKDVAWIADTCKLLMGIGWTTNYVGMIYKSLKDETYAMALMALCCNFAWELTYALIYPFGSDLEMYVHFSGLMLNCGVMYTAVKNAHREWGHSPLVLRNLPLIFIICVSGFMSGHVALAAQVGPSLAQAWSAYGCQLLLSVGGLCQLLCRGHSRGASYFLWFSRFFGSLVLVPQDILRYKYWRVDHEYMGSPLYIWFVCIFLLLDGSYGICLWYVRRFERQTAVAHKKKK.

The next 7 helical transmembrane spans lie at 15 to 37 (DVAW…NYVG), 51 to 71 (ALMA…IYPF), 75 to 95 (LEMY…YTAV), 112 to 132 (LPLI…ALAA), 141 to 161 (AWSA…QLLC), 169 to 189 (SYFL…QDIL), and 205 to 225 (LYIW…ICLW).

Belongs to the paxB family.

It localises to the membrane. It participates in secondary metabolite biosynthesis; terpenoid biosynthesis. Terpene cyclase; part of the gene cluster that mediates the biosynthesis of diterpenoid pyrones. The first step of the pathway is the synthesis of the alpha-pyrone moiety by the polyketide synthase dpfgA via condensation of one acetyl-CoA starter unit with 3 malonyl-CoA units and 2 methylations. The alpha-pyrone is then combined with geranylgeranyl pyrophosphate (GGPP) formed by the GGPP synthase dpfgD through the action of the prenyltransferase dpfgC to yield a linear alpha-pyrone diterpenoid. Subsequent steps in the diterpenoid pyrone biosynthetic pathway involve the decalin core formation, which is initiated by the epoxidation of the C10-C11 olefin by the FAD-dependent oxidoreductase dpfgE, and is followed by a cyclization cascade catalyzed by the terpene cyclase dpfgB. The short chain dehydrogenase/reductase dpfgG then oxidizes the 8S hydroxy group to a ketone and the short chain dehydrogenase/reductase dpfgH reduces the ketone to the 8R hydroxy group to yield higginsianin B. Higginsianin B is further methylated by the methyltransferase dpfgI to produce the intermediate named FDDP B. The cytochrome P450 monooxygenase dfgpJ then catalyzes a three-step oxidation at C-27 to generate a carboxylic acid as well as C-26 hydroxylation. Finally, methyltransferase dpfgK methylates the carboxylic acid generated by dpfgJ, yielding the final diterpenoid pyrones from the pathway which were named FDDP D and FDDP E. This chain is Terpene cyclase dpfgB, found in Gibberella zeae (strain ATCC MYA-4620 / CBS 123657 / FGSC 9075 / NRRL 31084 / PH-1) (Wheat head blight fungus).